The following is a 73-amino-acid chain: UPF0435 protein lin1819 (73 aa).

It belongs to the UPF0435 family.

The protein is UPF0435 protein lin1819 of Listeria innocua serovar 6a (strain ATCC BAA-680 / CLIP 11262).